The sequence spans 565 residues: Heme/hemopexin transporter protein HuxB (565 aa).

The first 26 residues, 1 to 26 (MKMRPRYSVIASAVSLGFVLSKSVMA), serve as a signal peptide directing secretion. Residues 73 to 150 (FPLKQVQILD…GTVKILLLKG (78 aa)) enclose the POTRA domain.

The protein belongs to the TPS (TC 1.B.20) family.

The protein localises to the cell outer membrane. In terms of biological role, likely functions in the release of soluble HxuA from the cell. Functionally, probable member of a two partner secretion pathway (TPS) in which it mediates the secretion of HuxA. In Haemophilus influenzae (strain ATCC 51907 / DSM 11121 / KW20 / Rd), this protein is Heme/hemopexin transporter protein HuxB (hxuB).